The following is a 475-amino-acid chain: MYKAKKTTDSSLESLIKRATDETLTTNNWEYIIAVCDKVKSDPEVATKKAITILTTRLQSKDANVLLRTLSLIIALGENCGSRMQQEIASEAFLKPLTKKLKEKKLHETVKVEIAKLIEQLHQSFKSDPSLKPMSDAYNKIKQEHPRYLERNVPAKPEKHDVSSKTQSEEDELQRVINLSLQEYEREQFSKSLQKPLPDPKKTSPRNANIAQEDSDDKKPEISKVRAMFDLVSHEKDELSFRKGDLINVIEVVYRDWWRGSLPTGEVGIFPLNYVAPVYAKSSDQIEKELQIENRLLNVESKKIDKVLAMLSAATNGNENIDDEELENLYGQVSGLRSQLGHLIMKHTQREKELKLLNEQLAIEDKAFHDLLDKSISSFSNRNSYISSDVVPYPTGGNGSVNSGYPAVPNAYSGYNTYNGNGTPLAMQPTSLGFGNSIYASQPQQQPPRQVSQQMPPQDYQSYSNINSFPEVDRM.

The VHS domain occupies 19 to 149; it reads ATDETLTTNN…KIKQEHPRYL (131 aa). Disordered stretches follow at residues 145-171 and 189-219; these read HPRYLERNVPAKPEKHDVSSKTQSEED and FSKSLQKPLPDPKKTSPRNANIAQEDSDDKK. One can recognise a UIM domain in the interval 168–187; it reads SEEDELQRVINLSLQEYERE. The SH3 domain maps to 220–280; it reads PEISKVRAMF…PLNYVAPVYA (61 aa). Residues 434–475 form a disordered region; sequence FGNSIYASQPQQQPPRQVSQQMPPQDYQSYSNINSFPEVDRM. Residues 442 to 458 show a composition bias toward low complexity; that stretch reads QPQQQPPRQVSQQMPPQ. Residues 459 to 468 show a composition bias toward polar residues; that stretch reads DYQSYSNINS.

This sequence belongs to the STAM family. Component of the ESCRT-0 complex composed of HSE1 and VPS27.

It localises to the endosome membrane. Component of the ESCRT-0 complex which is the sorting receptor for ubiquitinated cargo proteins at the multivesicular body (MVB). The protein is Class E vacuolar protein-sorting machinery protein HSE1 (HSE1) of Scheffersomyces stipitis (strain ATCC 58785 / CBS 6054 / NBRC 10063 / NRRL Y-11545) (Yeast).